Here is a 558-residue protein sequence, read N- to C-terminus: uncharacterized protein (558 aa).

Residues 47–78 (DFDDLNSIFKDFQKQKKNLKDNILKFYNKKKE) are a coiled coil. 2 disordered regions span residues 239-266 (NNNN…SKIE) and 424-447 (NNNN…NSGE). Residues 245 to 266 (TETESEIESKSESESESESKIE) are compositionally biased toward basic and acidic residues. The segment covering 424–444 (NNNNNNNNNNNNNNNNNNNNN) has biased composition (low complexity).

This is an uncharacterized protein from Dictyostelium discoideum (Social amoeba).